A 148-amino-acid polypeptide reads, in one-letter code: Globin, monomeric component M-IV (148 aa).

Residues 2–147 (GLSAAQRQVV…ISGALISGLQ (146 aa)) enclose the Globin domain. Position 91 (H91) interacts with heme b.

Monomer.

The protein is Globin, monomeric component M-IV of Glycera dibranchiata (Bloodworm).